We begin with the raw amino-acid sequence, 131 residues long: Transcription antitermination protein NusB (131 aa).

Belongs to the NusB family.

Functionally, involved in transcription antitermination. Required for transcription of ribosomal RNA (rRNA) genes. Binds specifically to the boxA antiterminator sequence of the ribosomal RNA (rrn) operons. This chain is Transcription antitermination protein NusB, found in Campylobacter fetus subsp. fetus (strain 82-40).